We begin with the raw amino-acid sequence, 439 residues long: 23S rRNA (uracil(1939)-C(5))-methyltransferase RlmD (439 aa).

The 60-residue stretch at 10 to 69 (KTQLNTRHQAVQVERLDHHGAGIAYLKKKPLFIDGALPGEEVVTQLVEEKSKFARGKLIK) folds into the TRAM domain. [4Fe-4S] cluster-binding residues include C82, C88, C91, and C169. Positions 272, 301, 306, 322, 349, and 370 each coordinate S-adenosyl-L-methionine. The Nucleophile role is filled by C396.

The protein belongs to the class I-like SAM-binding methyltransferase superfamily. RNA M5U methyltransferase family. RlmD subfamily.

It catalyses the reaction uridine(1939) in 23S rRNA + S-adenosyl-L-methionine = 5-methyluridine(1939) in 23S rRNA + S-adenosyl-L-homocysteine + H(+). In terms of biological role, catalyzes the formation of 5-methyl-uridine at position 1939 (m5U1939) in 23S rRNA. This Vibrio parahaemolyticus serotype O3:K6 (strain RIMD 2210633) protein is 23S rRNA (uracil(1939)-C(5))-methyltransferase RlmD.